The sequence spans 394 residues: Elongation factor Tu (394 aa).

The region spanning 10-204 is the tr-type G domain; the sequence is KLHINVGTIG…VLDSYIPEPK (195 aa). The tract at residues 19 to 26 is G1; it reads GHVDHGKT. Residue 19-26 participates in GTP binding; the sequence is GHVDHGKT. Thr26 is a binding site for Mg(2+). The segment at 60-64 is G2; the sequence is GITIN. The tract at residues 81–84 is G3; that stretch reads DCPG. GTP contacts are provided by residues 81-85 and 136-139; these read DCPGH and NKCD. The G4 stretch occupies residues 136–139; the sequence is NKCD. The interval 174–176 is G5; that stretch reads SAL.

Belongs to the TRAFAC class translation factor GTPase superfamily. Classic translation factor GTPase family. EF-Tu/EF-1A subfamily. Monomer.

It is found in the cytoplasm. The enzyme catalyses GTP + H2O = GDP + phosphate + H(+). Its function is as follows. GTP hydrolase that promotes the GTP-dependent binding of aminoacyl-tRNA to the A-site of ribosomes during protein biosynthesis. This is Elongation factor Tu from Baumannia cicadellinicola subsp. Homalodisca coagulata.